Consider the following 591-residue polypeptide: Monoterpene synthase 8, chloroplastic (591 aa).

Residues M1–S46 constitute a chloroplast transit peptide. D346, D350, and E497 together coordinate Mg(2+). The short motif at D346–D350 is the DDXXD motif element.

This sequence belongs to the terpene synthase family. Tpsa subfamily. Requires Mg(2+) as cofactor. It depends on Mn(2+) as a cofactor. As to expression, highly expressed in flowers, petals and sepals, but almost undetectable in vegetative organs.

Its subcellular location is the plastid. The protein localises to the chloroplast. The catalysed reaction is (2E)-geranyl diphosphate + H2O = (R)-linalool + diphosphate. It catalyses the reaction (2E)-geranyl diphosphate + H2O = (S)-linalool + diphosphate. The enzyme catalyses (2E,6E)-farnesyl diphosphate = (S)-beta-bisabolene + diphosphate. It carries out the reaction (2E,6E)-farnesyl diphosphate = (E,R)-alpha-bisabolene + diphosphate. The catalysed reaction is (2E,6E)-farnesyl diphosphate = (E)-beta-farnesene + diphosphate. It catalyses the reaction (2E,6E)-farnesyl diphosphate = beta-sesquiphellandrene + diphosphate. The enzyme catalyses (2E,6E)-farnesyl diphosphate = (1S,5S,6R)-alpha-bergamotene + diphosphate. It functions in the pathway secondary metabolite biosynthesis; terpenoid biosynthesis. Sesquiterpene and monoterpene synthase involved in the biosynthesis of volatile compounds present in floral scent. Mediates the conversion of (2E)-geranyl diphosphate (GPP) into linalool, with trace levels of myrcene, limonene and (Z)-beta-ocimene. Also acts as a sesquiterpene synthase by catalyzing the conversion of farnesyl diphosphate (FPP) to alpha-bergamotene and beta-bisabolene and to minor products including alpha-curcumene, cis-alpha-bisabolene, beta-farnesene and beta-sesquiphellandrene, as well as seven other unidentified sesquiterpenes. The sequence is that of Monoterpene synthase 8, chloroplastic from Hedychium coronarium (White butterfly ginger-lily).